Consider the following 271-residue polypeptide: UPF0328 protein ECU09_0020 (271 aa).

This sequence belongs to the UPF0328 family.

The protein is UPF0328 protein ECU09_0020 of Encephalitozoon cuniculi (strain GB-M1) (Microsporidian parasite).